A 252-amino-acid chain; its full sequence is C-type lectin domain family 2 member D3 (252 aa).

The disordered stretch occupies residues 1–58; it reads MSSSAHLQDAPPLLSGTLTQNEGQTSLRQSSSCGPSAASASESLSGYTESRIPHSKVR. Residues 1–78 are Cytoplasmic-facing; it reads MSSSAHLQDA…ESRVKRYCCY (78 aa). Over residues 16 to 29 the composition is skewed to polar residues; it reads GTLTQNEGQTSLRQ. Residues 30–43 are compositionally biased toward low complexity; it reads SSSCGPSAASASES. The helical; Signal-anchor for type II membrane protein transmembrane segment at 79–99 threads the bilayer; sequence GGVITVVAIAIVVPLSVTLSV. Residues 100–252 are Extracellular-facing; that stretch reads KQMEQTSINN…KPKKYISQSQ (153 aa). The 106-residue stretch at 137-242 folds into the C-type lectin domain; the sequence is YGNKCFYFSE…VYVERPWICS (106 aa). Asn-150 is a glycosylation site (N-linked (GlcNAc...) asparagine). The cysteines at positions 158 and 241 are disulfide-linked.

It is found in the cell membrane. In terms of biological role, lectin-type cell surface receptor. This is C-type lectin domain family 2 member D3 (Clec2d3) from Rattus norvegicus (Rat).